We begin with the raw amino-acid sequence, 354 residues long: Guanine nucleotide-binding protein G(i) subunit alpha-3 (354 aa).

Gly2 is lipidated: N-myristoyl glycine. Residue Cys3 is the site of S-palmitoyl cysteine attachment. Residues 32 to 354 form the G-alpha domain; the sequence is KEVKLLLLGA…KNNLKECGLY (323 aa). A G1 motif region spans residues 35-48; sequence KLLLLGAGESGKST. Positions 42, 43, 44, 45, 46, 47, 48, 150, 151, 175, 176, 177, 178, 179, 180, 181, 201, 203, 269, 270, 272, 273, 325, 326, and 327 each coordinate GTP. Mg(2+) is bound at residue Ser47. The tract at residues 173-181 is G2 motif; sequence DVLRTRVKT. Thr181 contributes to the Mg(2+) binding site. The G3 motif stretch occupies residues 196-205; that stretch reads FKMFDVGGQR. The G4 motif stretch occupies residues 265 to 272; the sequence is ILFLNKKD. The interval 324 to 329 is G5 motif; it reads TCATDT.

This sequence belongs to the G-alpha family. G(i/o/t/z) subfamily. Heterotrimeric G proteins are composed of 3 units; alpha, beta and gamma. The alpha subunit contains the guanine nucleotide binding site. GTP binding causes dissociation of the heterotrimer, liberating the individual subunits so that they can interact with downstream effector proteins. Forms a complex with CCDC88A/GIV and EGFR which leads to enhanced EGFR signaling and triggering of cell migration; ligand stimulation is required for recruitment of GNAI3 to the complex. Interacts (inactive GDP-bound form) with CCDC88A/GIV (via GBA motif); the interaction leads to activation of GNAI3. Interacts (inactive GDP-bound form) with CCDC88C/DAPLE (via GBA motif); the interaction leads to activation of GNAI3. Interacts (inactive GDP-bound form) with NUCB1 (via GBA motif) and NUCB2 (via GBA motif); the interaction leads to activation of GNAI3. Interacts (inactive GDP-bound form) with PLCD4 (via GBA motif); the interaction leads to activation of GNAI3. Interacts with INSR; the interaction is probably mediated by CCDC88A/GIV. Interacts with GPSM1. Interacts (GDP-bound form) with GPSM2 (via GoLoco domains). Does not interact with RGS2. Interacts with RGS8 and RGS10; this strongly enhances the intrinsic GTPase activity. Interacts with RGS16; this strongly enhances the intrinsic GTPase activity. Interacts with RGS12. Interacts (via active GTP- or inactive GDP-bound form) with RGS14. Interacts (via active GTP-bound form) with TRPC5 (via ANK repeats) in a homotetrameric ion channel; the interaction is direct and activates the channel activity. Ubiquitously expressed.

It localises to the cytoplasm. The protein resides in the cell membrane. Its subcellular location is the cytoskeleton. It is found in the microtubule organizing center. The protein localises to the centrosome. Its function is as follows. Heterotrimeric guanine nucleotide-binding proteins (G proteins) function as transducers downstream of G protein-coupled receptors (GPCRs) in numerous signaling cascades. The alpha chain contains the guanine nucleotide binding site and alternates between an active, GTP-bound state and an inactive, GDP-bound state. Signaling by an activated GPCR promotes GDP release and GTP binding. The alpha subunit has a low GTPase activity that converts bound GTP to GDP, thereby terminating the signal. Both GDP release and GTP hydrolysis are modulated by numerous regulatory proteins. Signaling is mediated via effector proteins, such as adenylate cyclase. Inhibits adenylate cyclase activity, leading to decreased intracellular cAMP levels. Stimulates the activity of receptor-regulated K(+) channels. The active GTP-bound form prevents the association of RGS14 with centrosomes and is required for the translocation of RGS14 from the cytoplasm to the plasma membrane. May play a role in cell division. The active GTP-bound form activates the calcium permeant TRPC5 ion channels. The chain is Guanine nucleotide-binding protein G(i) subunit alpha-3 (GNAI3) from Cavia porcellus (Guinea pig).